The primary structure comprises 424 residues: Glutamyl-tRNA reductase (424 aa).

Residues 51–54 (TCNR), Ser-99, 104–106 (EDQ), and Gln-110 contribute to the substrate site. The active-site Nucleophile is Cys-52. 179–184 (GGGEMG) is a binding site for NADP(+).

This sequence belongs to the glutamyl-tRNA reductase family. Homodimer.

It catalyses the reaction (S)-4-amino-5-oxopentanoate + tRNA(Glu) + NADP(+) = L-glutamyl-tRNA(Glu) + NADPH + H(+). It participates in porphyrin-containing compound metabolism; protoporphyrin-IX biosynthesis; 5-aminolevulinate from L-glutamyl-tRNA(Glu): step 1/2. Catalyzes the NADPH-dependent reduction of glutamyl-tRNA(Glu) to glutamate 1-semialdehyde (GSA). The chain is Glutamyl-tRNA reductase from Methanocorpusculum labreanum (strain ATCC 43576 / DSM 4855 / Z).